Consider the following 482-residue polypeptide: UDP-N-acetylmuramoyl-L-alanyl-D-glutamate--2,6-diaminopimelate ligase (482 aa).

UDP-N-acetyl-alpha-D-muramoyl-L-alanyl-D-glutamate-binding residues include Leu28 and Ser30. 108–114 (GTNGKTT) is a binding site for ATP. Residues 150–151 (TT), Ser177, Gln183, and Arg185 contribute to the UDP-N-acetyl-alpha-D-muramoyl-L-alanyl-D-glutamate site. N6-carboxylysine is present on Lys217. Meso-2,6-diaminopimelate-binding positions include Arg372, 396-399 (DNPR), Gly447, and Glu451. Positions 396 to 399 (DNPR) match the Meso-diaminopimelate recognition motif motif.

Belongs to the MurCDEF family. MurE subfamily. Requires Mg(2+) as cofactor. In terms of processing, carboxylation is probably crucial for Mg(2+) binding and, consequently, for the gamma-phosphate positioning of ATP.

Its subcellular location is the cytoplasm. It carries out the reaction UDP-N-acetyl-alpha-D-muramoyl-L-alanyl-D-glutamate + meso-2,6-diaminopimelate + ATP = UDP-N-acetyl-alpha-D-muramoyl-L-alanyl-gamma-D-glutamyl-meso-2,6-diaminopimelate + ADP + phosphate + H(+). Its pathway is cell wall biogenesis; peptidoglycan biosynthesis. Functionally, catalyzes the addition of meso-diaminopimelic acid to the nucleotide precursor UDP-N-acetylmuramoyl-L-alanyl-D-glutamate (UMAG) in the biosynthesis of bacterial cell-wall peptidoglycan. The chain is UDP-N-acetylmuramoyl-L-alanyl-D-glutamate--2,6-diaminopimelate ligase from Aquifex aeolicus (strain VF5).